A 628-amino-acid polypeptide reads, in one-letter code: tRNA uridine 5-carboxymethylaminomethyl modification enzyme MnmG (628 aa).

FAD-binding positions include 14–19 (GAGHAG), Val-126, and Ser-181. Position 273–287 (273–287 (GPRYCPSIEDKVVRF)) interacts with NAD(+). Gln-370 is a binding site for FAD.

This sequence belongs to the MnmG family. As to quaternary structure, homodimer. Heterotetramer of two MnmE and two MnmG subunits. It depends on FAD as a cofactor.

It is found in the cytoplasm. In terms of biological role, NAD-binding protein involved in the addition of a carboxymethylaminomethyl (cmnm) group at the wobble position (U34) of certain tRNAs, forming tRNA-cmnm(5)s(2)U34. This Bacillus subtilis (strain 168) protein is tRNA uridine 5-carboxymethylaminomethyl modification enzyme MnmG.